A 33-amino-acid chain; its full sequence is Beta-amanitin proprotein (33 aa).

Residues 1 to 10 (MSDINATRLP) constitute a propeptide that is removed on maturation. The cyclopeptide (Ile-Pro) cross-link spans 11–18 (IWGIGCDP). A cross-link (2'-cysteinyl-6'-hydroxytryptophan sulfoxide (Trp-Cys)) is located at residues 12-16 (WGIGC). The propeptide occupies 19–33 (CVGDDVTAVLTRGEA).

This sequence belongs to the MSDIN fungal toxin family. Processed by the macrocyclase-peptidase enzyme POPB to yield a toxic cyclic decapeptide. POPB first removes 10 residues from the N-terminus. Conformational trapping of the remaining peptide forces the enzyme to release this intermediate rather than proceed to macrocyclization. The enzyme rebinds the remaining peptide in a different conformation and catalyzes macrocyclization of the N-terminal 8 residues.

Toxin belonging to the bicyclic octapeptides amatoxins that acts by binding non-competitively to RNA polymerase II and greatly slowing the elongation of transcripts from target promoters. This Amanita pallidorosea protein is Beta-amanitin proprotein.